The sequence spans 214 residues: Octanoyltransferase (214 aa).

One can recognise a BPL/LPL catalytic domain in the interval Lys-35 to Phe-211. Residues Arg-75–His-82, Ser-142–Gly-144, and Gly-155–Ser-157 contribute to the substrate site. Cys-173 acts as the Acyl-thioester intermediate in catalysis.

This sequence belongs to the LipB family.

It is found in the cytoplasm. The enzyme catalyses octanoyl-[ACP] + L-lysyl-[protein] = N(6)-octanoyl-L-lysyl-[protein] + holo-[ACP] + H(+). Its pathway is protein modification; protein lipoylation via endogenous pathway; protein N(6)-(lipoyl)lysine from octanoyl-[acyl-carrier-protein]: step 1/2. Its function is as follows. Catalyzes the transfer of endogenously produced octanoic acid from octanoyl-acyl-carrier-protein onto the lipoyl domains of lipoate-dependent enzymes. Lipoyl-ACP can also act as a substrate although octanoyl-ACP is likely to be the physiological substrate. This chain is Octanoyltransferase, found in Prochlorococcus marinus subsp. pastoris (strain CCMP1986 / NIES-2087 / MED4).